The sequence spans 168 residues: Large ribosomal subunit protein uL10 (168 aa).

Belongs to the universal ribosomal protein uL10 family. As to quaternary structure, part of the ribosomal stalk of the 50S ribosomal subunit. The N-terminus interacts with L11 and the large rRNA to form the base of the stalk. The C-terminus forms an elongated spine to which L12 dimers bind in a sequential fashion forming a multimeric L10(L12)X complex.

Forms part of the ribosomal stalk, playing a central role in the interaction of the ribosome with GTP-bound translation factors. The chain is Large ribosomal subunit protein uL10 from Ralstonia nicotianae (strain ATCC BAA-1114 / GMI1000) (Ralstonia solanacearum).